A 148-amino-acid polypeptide reads, in one-letter code: MKLLVQRVNEAKVDINGITKSKINDGFLVLLGIHKEDNESDIDYCIRKLINLRIFSDEDDKLNLSIKDLNYEILLVSQFTLYASTRKGNRPSFDKCAKGEFAKNLYDNFIKKLKLENVPFQTGEFGADMKVSLTNDGPVTIIIDSRSE.

The Gly-cisPro motif, important for rejection of L-amino acids signature appears at 137-138 (GP).

This sequence belongs to the DTD family. As to quaternary structure, homodimer.

It localises to the cytoplasm. The enzyme catalyses glycyl-tRNA(Ala) + H2O = tRNA(Ala) + glycine + H(+). It catalyses the reaction a D-aminoacyl-tRNA + H2O = a tRNA + a D-alpha-amino acid + H(+). Its function is as follows. An aminoacyl-tRNA editing enzyme that deacylates mischarged D-aminoacyl-tRNAs. Also deacylates mischarged glycyl-tRNA(Ala), protecting cells against glycine mischarging by AlaRS. Acts via tRNA-based rather than protein-based catalysis; rejects L-amino acids rather than detecting D-amino acids in the active site. By recycling D-aminoacyl-tRNA to D-amino acids and free tRNA molecules, this enzyme counteracts the toxicity associated with the formation of D-aminoacyl-tRNA entities in vivo and helps enforce protein L-homochirality. The polypeptide is D-aminoacyl-tRNA deacylase (Finegoldia magna (strain ATCC 29328 / DSM 20472 / WAL 2508) (Peptostreptococcus magnus)).